Consider the following 237-residue polypeptide: MKEHFQLKETIVTIVADDQSYIELAKESIAVHRLKLEEYIRSDPYFKVTLEPYECSSDAPEVVKRLVAAGNSVGIGPMSAVAGTIAALAVGSMVDAGATSAIVDNGGDIAFLNDRPIVIGIYAGQSSIRNIGFTLEPSDHIRGICTSSGTVGPSINFGCADAAVVFSDDVSLADSAATELSNATGIGHEGVENAFDTISSIINIDGAVVIQGEHMGMWGTIPQITRADMQYECITKG.

The protein belongs to the UPF0280 family.

The polypeptide is UPF0280 protein Mbur_0309 (Methanococcoides burtonii (strain DSM 6242 / NBRC 107633 / OCM 468 / ACE-M)).